Here is a 459-residue protein sequence, read N- to C-terminus: Ribulose bisphosphate carboxylase large chain (459 aa).

Lys-4 carries the post-translational modification N6,N6,N6-trimethyllysine. 2 residues coordinate substrate: Asn-113 and Thr-163. The active-site Proton acceptor is Lys-165. Lys-167 is a substrate binding site. Mg(2+) contacts are provided by Lys-191, Asp-193, and Glu-194. An N6-carboxylysine modification is found at Lys-191. His-284 functions as the Proton acceptor in the catalytic mechanism. Positions 285, 317, and 369 each coordinate substrate.

This sequence belongs to the RuBisCO large chain family. Type I subfamily. As to quaternary structure, heterohexadecamer of 8 large chains and 8 small chains; disulfide-linked. The disulfide link is formed within the large subunit homodimers. The cofactor is Mg(2+). Post-translationally, the disulfide bond which can form in the large chain dimeric partners within the hexadecamer appears to be associated with oxidative stress and protein turnover.

It is found in the plastid. It localises to the chloroplast. It carries out the reaction 2 (2R)-3-phosphoglycerate + 2 H(+) = D-ribulose 1,5-bisphosphate + CO2 + H2O. The enzyme catalyses D-ribulose 1,5-bisphosphate + O2 = 2-phosphoglycolate + (2R)-3-phosphoglycerate + 2 H(+). RuBisCO catalyzes two reactions: the carboxylation of D-ribulose 1,5-bisphosphate, the primary event in carbon dioxide fixation, as well as the oxidative fragmentation of the pentose substrate in the photorespiration process. Both reactions occur simultaneously and in competition at the same active site. The sequence is that of Ribulose bisphosphate carboxylase large chain from Cephalotus follicularis (Albany pitcher plant).